A 90-amino-acid polypeptide reads, in one-letter code: WAP four-disulfide core domain protein 12 (90 aa).

Positions 1–23 (MGSSSFLVLMVSLALVTLVAVEG) are cleaved as a signal peptide. The WAP domain maps to 27 to 74 (GIEKAGVCPADNVRCFKSDPPQCHTDQDCLGERKCCYLHCGFKCVIPV). 4 disulfide bridges follow: C34-C62, C41-C66, C49-C61, and C55-C70.

It is found in the secreted. Antibacterial protein. Putative acid-stable proteinase inhibitor. The protein is WAP four-disulfide core domain protein 12 (WFDC12) of Gorilla gorilla gorilla (Western lowland gorilla).